The sequence spans 660 residues: Bifunctional polymyxin resistance protein ArnA (660 aa).

The interval 1–304 is formyltransferase ArnAFT; sequence MKTVVFAYHD…TLGLVQGSRL (304 aa). 86–88 serves as a coordination point for (6R)-10-formyltetrahydrofolate; sequence HLI. The active-site Proton donor; for formyltransferase activity is the His-104. (6R)-10-formyltetrahydrofolate is bound by residues Arg-114 and 136-140; that span reads VKRAD. Residues 314–660 are dehydrogenase ArnADH; that stretch reads RRTRVLILGV…RTVDLTDKPS (347 aa). NAD(+) is bound by residues Asp-347 and 368 to 369; that span reads DI. UDP-alpha-D-glucuronate contacts are provided by residues Ala-393, Tyr-398, and 432–433; that span reads TS. The active-site Proton acceptor; for decarboxylase activity is the Glu-434. UDP-alpha-D-glucuronate-binding positions include Arg-460, Asn-492, 526-535, and Tyr-613; that span reads KLIDGGKQKR. Arg-619 serves as the catalytic Proton donor; for decarboxylase activity.

It in the N-terminal section; belongs to the Fmt family. UDP-L-Ara4N formyltransferase subfamily. The protein in the C-terminal section; belongs to the NAD(P)-dependent epimerase/dehydratase family. UDP-glucuronic acid decarboxylase subfamily. Homohexamer, formed by a dimer of trimers.

The enzyme catalyses UDP-alpha-D-glucuronate + NAD(+) = UDP-beta-L-threo-pentopyranos-4-ulose + CO2 + NADH. The catalysed reaction is UDP-4-amino-4-deoxy-beta-L-arabinose + (6R)-10-formyltetrahydrofolate = UDP-4-deoxy-4-formamido-beta-L-arabinose + (6S)-5,6,7,8-tetrahydrofolate + H(+). Its pathway is nucleotide-sugar biosynthesis; UDP-4-deoxy-4-formamido-beta-L-arabinose biosynthesis; UDP-4-deoxy-4-formamido-beta-L-arabinose from UDP-alpha-D-glucuronate: step 1/3. The protein operates within nucleotide-sugar biosynthesis; UDP-4-deoxy-4-formamido-beta-L-arabinose biosynthesis; UDP-4-deoxy-4-formamido-beta-L-arabinose from UDP-alpha-D-glucuronate: step 3/3. It functions in the pathway bacterial outer membrane biogenesis; lipopolysaccharide biosynthesis. Bifunctional enzyme that catalyzes the oxidative decarboxylation of UDP-glucuronic acid (UDP-GlcUA) to UDP-4-keto-arabinose (UDP-Ara4O) and the addition of a formyl group to UDP-4-amino-4-deoxy-L-arabinose (UDP-L-Ara4N) to form UDP-L-4-formamido-arabinose (UDP-L-Ara4FN). The modified arabinose is attached to lipid A and is required for resistance to polymyxin and cationic antimicrobial peptides. This is Bifunctional polymyxin resistance protein ArnA from Escherichia coli (strain SE11).